A 234-amino-acid polypeptide reads, in one-letter code: Probable RNA/DNA demethylase ALKBH6 (234 aa).

The Fe2OG dioxygenase domain occupies 96 to 222; it reads TANHVLVNEY…RVSLTIRHVP (127 aa). 2-oxoglutarate contacts are provided by asparagine 103 and tyrosine 105. The Fe cation site is built by histidine 114, aspartate 116, and histidine 180. The 2-oxoglutarate site is built by arginine 213 and serine 215.

Belongs to the alkB family. Requires Fe(2+) as cofactor.

It is found in the cytoplasm. The protein resides in the nucleus. In terms of biological role, probable Fe(2+)/2-oxoglutarate-dependent dioxygenase involved in oxidative demethylation of nucleic acids. Binds nucleic acids with a preference for ssDNA or ssRNA to other types of DNAs. May play a role in nucleic acid damage repair. In Danio rerio (Zebrafish), this protein is Probable RNA/DNA demethylase ALKBH6 (alkbh6).